Here is a 473-residue protein sequence, read N- to C-terminus: Probable glycine dehydrogenase (decarboxylating) subunit 2 (473 aa).

Lys-266 bears the N6-(pyridoxal phosphate)lysine mark.

The protein belongs to the GcvP family. C-terminal subunit subfamily. The glycine cleavage system is composed of four proteins: P, T, L and H. In this organism, the P 'protein' is a heterodimer of two subunits. Pyridoxal 5'-phosphate is required as a cofactor.

The enzyme catalyses N(6)-[(R)-lipoyl]-L-lysyl-[glycine-cleavage complex H protein] + glycine + H(+) = N(6)-[(R)-S(8)-aminomethyldihydrolipoyl]-L-lysyl-[glycine-cleavage complex H protein] + CO2. In terms of biological role, the glycine cleavage system catalyzes the degradation of glycine. The P protein binds the alpha-amino group of glycine through its pyridoxal phosphate cofactor; CO(2) is released and the remaining methylamine moiety is then transferred to the lipoamide cofactor of the H protein. The sequence is that of Probable glycine dehydrogenase (decarboxylating) subunit 2 from Thermus thermophilus (strain ATCC BAA-163 / DSM 7039 / HB27).